Reading from the N-terminus, the 968-residue chain is uncharacterized protein (968 aa).

A helical transmembrane segment spans residues Leu-12–Phe-32.

To E.coli YtfN.

Its subcellular location is the membrane. This is an uncharacterized protein from Buchnera aphidicola subsp. Schizaphis graminum (strain Sg).